We begin with the raw amino-acid sequence, 457 residues long: Cysteine--tRNA ligase (457 aa).

C28 contributes to the Zn(2+) binding site. Residues 30–40 (MTVYDLCHIGH) carry the 'HIGH' region motif. The Zn(2+) site is built by C209, H234, and E238. The 'KMSKS' region motif lies at 266–270 (KMSKS). Position 269 (K269) interacts with ATP.

The protein belongs to the class-I aminoacyl-tRNA synthetase family. In terms of assembly, monomer. The cofactor is Zn(2+).

It is found in the cytoplasm. It carries out the reaction tRNA(Cys) + L-cysteine + ATP = L-cysteinyl-tRNA(Cys) + AMP + diphosphate. This Chromobacterium violaceum (strain ATCC 12472 / DSM 30191 / JCM 1249 / CCUG 213 / NBRC 12614 / NCIMB 9131 / NCTC 9757 / MK) protein is Cysteine--tRNA ligase.